A 564-amino-acid polypeptide reads, in one-letter code: Arginine--tRNA ligase (564 aa).

The short motif at 124-134 (PNIAKDMHVGH) is the 'HIGH' region element.

This sequence belongs to the class-I aminoacyl-tRNA synthetase family. In terms of assembly, monomer.

The protein localises to the cytoplasm. The catalysed reaction is tRNA(Arg) + L-arginine + ATP = L-arginyl-tRNA(Arg) + AMP + diphosphate. This chain is Arginine--tRNA ligase, found in Chlamydia caviae (strain ATCC VR-813 / DSM 19441 / 03DC25 / GPIC) (Chlamydophila caviae).